The following is a 94-amino-acid chain: MLQARIEEKQKEYELICKLRDSSNDMVQQIETLAAKLETLTDGSEAVATVLNNWPSIFESIQIASQHSGALVRIPPSTSNTNASATEQGDVEEV.

The stretch at 18–38 (KLRDSSNDMVQQIETLAAKLE) forms a coiled coil. Positions 72–94 (VRIPPSTSNTNASATEQGDVEEV) are disordered. Residues 76–87 (PSTSNTNASATE) show a composition bias toward polar residues.

The protein belongs to the DASH complex DAD2 family. In terms of assembly, component of the DASH complex consisting of ask1, dad1, dad2, dad3, dad4, dam1, duo1, dad5, spc19 and spc34, with a stoichiometry of one copy of each subunit per complex. Multiple DASH complexes oligomerize to form a ring that encircles spindle microtubules and organizes the rod-like NDC80 complexes of the outer kinetochore. DASH complex oligomerization strengthens microtubule attachments. On cytoplasmic microtubules, DASH complexes appear to form patches instead of rings.

It localises to the nucleus. It is found in the cytoplasm. The protein resides in the cytoskeleton. Its subcellular location is the spindle. The protein localises to the chromosome. It localises to the centromere. It is found in the kinetochore. In terms of biological role, component of the DASH complex that connects microtubules with kinetochores and couples microtubule depolymerisation to chromosome movement; it is involved in retrieving kinetochores to the spindle poles before their re-orientation on the spindle in early mitosis and allows microtubule depolymerization to pull chromosomes apart and resist detachment during anaphase. Kinetochores, consisting of a centromere-associated inner segment and a microtubule-contacting outer segment, play a crucial role in chromosome segregation by mediating the physical connection between centromeric DNA and microtubules. Kinetochores also serve as an input point for the spindle assembly checkpoint, which delays anaphase until all chromosomes have bioriented on the mitotic spindle. The DASH complex mediates bipolar kinetochore-microtubule attachments and facilitates the formation of additional interactions between outer kinetochore components and spindle microtubules. During chromosome movement along the microtubule, it is required both for the sliding of kinetochores along the lateral side of the microtubule and also for microtubule end-on pulling on the kinetochore. Modulates cytoplasmic microtubule dynamics by tracking the plus-end of shortening microtubules and slowing their depolymerization. The chain is DASH complex subunit dad2 from Schizosaccharomyces pombe (strain 972 / ATCC 24843) (Fission yeast).